Here is a 33-residue protein sequence, read N- to C-terminus: Brevinin-2DYa (33 aa).

A disulfide bridge links Cys-27 with Cys-33.

In terms of tissue distribution, expressed by the skin glands.

It is found in the secreted. Antimicrobial peptide. In Rana dybowskii (Dybovsky's frog), this protein is Brevinin-2DYa.